Reading from the N-terminus, the 931-residue chain is Bifunctional uridylyltransferase/uridylyl-removing enzyme (931 aa).

The interval 1–383 is uridylyltransferase; that stretch reads MDSVATDSKA…TTGSTWRRVP (383 aa). The segment at 384-739 is uridylyl-removing; the sequence is ESDDFIVDNN…VGFDPARGVT (356 aa). The region spanning 499–622 is the HD domain; sequence VDEHLIRCIG…VQSVEQMKLL (124 aa). 2 consecutive ACT domains span residues 740–822 and 851–931; these read ELTI…AVAR and VIEV…QPAA.

The protein belongs to the GlnD family. The cofactor is Mg(2+).

The enzyme catalyses [protein-PII]-L-tyrosine + UTP = [protein-PII]-uridylyl-L-tyrosine + diphosphate. It catalyses the reaction [protein-PII]-uridylyl-L-tyrosine + H2O = [protein-PII]-L-tyrosine + UMP + H(+). With respect to regulation, uridylyltransferase (UTase) activity is inhibited by glutamine, while glutamine activates uridylyl-removing (UR) activity. In terms of biological role, modifies, by uridylylation and deuridylylation, the PII regulatory proteins (GlnB and homologs), in response to the nitrogen status of the cell that GlnD senses through the glutamine level. Under low glutamine levels, catalyzes the conversion of the PII proteins and UTP to PII-UMP and PPi, while under higher glutamine levels, GlnD hydrolyzes PII-UMP to PII and UMP (deuridylylation). Thus, controls uridylylation state and activity of the PII proteins, and plays an important role in the regulation of nitrogen fixation and metabolism. This is Bifunctional uridylyltransferase/uridylyl-removing enzyme from Bradyrhizobium sp. (strain ORS 278).